Reading from the N-terminus, the 129-residue chain is Small ribosomal subunit protein uS11 (129 aa).

It belongs to the universal ribosomal protein uS11 family. As to quaternary structure, part of the 30S ribosomal subunit. Interacts with proteins S7 and S18. Binds to IF-3.

In terms of biological role, located on the platform of the 30S subunit, it bridges several disparate RNA helices of the 16S rRNA. Forms part of the Shine-Dalgarno cleft in the 70S ribosome. The protein is Small ribosomal subunit protein uS11 of Pectobacterium atrosepticum (strain SCRI 1043 / ATCC BAA-672) (Erwinia carotovora subsp. atroseptica).